The sequence spans 266 residues: Exosome complex component Rrp42 (266 aa).

It belongs to the RNase PH family. Rrp42 subfamily. As to quaternary structure, component of the archaeal exosome complex. Forms a hexameric ring-like arrangement composed of 3 Rrp41-Rrp42 heterodimers. The hexameric ring associates with a trimer of Rrp4 and/or Csl4 subunits.

The protein resides in the cytoplasm. In terms of biological role, non-catalytic component of the exosome, which is a complex involved in RNA degradation. Contributes to the structuring of the Rrp41 active site. The protein is Exosome complex component Rrp42 of Methanosarcina acetivorans (strain ATCC 35395 / DSM 2834 / JCM 12185 / C2A).